The following is a 316-amino-acid chain: 4-hydroxy-3-methylbut-2-enyl diphosphate reductase (316 aa).

C17 lines the [4Fe-4S] cluster pocket. (2E)-4-hydroxy-3-methylbut-2-enyl diphosphate contacts are provided by H46 and H79. Residues H46 and H79 each coordinate dimethylallyl diphosphate. H46 and H79 together coordinate isopentenyl diphosphate. C101 provides a ligand contact to [4Fe-4S] cluster. H129 serves as a coordination point for (2E)-4-hydroxy-3-methylbut-2-enyl diphosphate. H129 lines the dimethylallyl diphosphate pocket. H129 contributes to the isopentenyl diphosphate binding site. Catalysis depends on E131, which acts as the Proton donor. T170 provides a ligand contact to (2E)-4-hydroxy-3-methylbut-2-enyl diphosphate. C200 lines the [4Fe-4S] cluster pocket. Positions 228, 229, 230, and 273 each coordinate (2E)-4-hydroxy-3-methylbut-2-enyl diphosphate. Dimethylallyl diphosphate is bound by residues S228, S229, N230, and S273. Residues S228, S229, N230, and S273 each coordinate isopentenyl diphosphate.

Belongs to the IspH family. Requires [4Fe-4S] cluster as cofactor.

The enzyme catalyses isopentenyl diphosphate + 2 oxidized [2Fe-2S]-[ferredoxin] + H2O = (2E)-4-hydroxy-3-methylbut-2-enyl diphosphate + 2 reduced [2Fe-2S]-[ferredoxin] + 2 H(+). It catalyses the reaction dimethylallyl diphosphate + 2 oxidized [2Fe-2S]-[ferredoxin] + H2O = (2E)-4-hydroxy-3-methylbut-2-enyl diphosphate + 2 reduced [2Fe-2S]-[ferredoxin] + 2 H(+). Its pathway is isoprenoid biosynthesis; dimethylallyl diphosphate biosynthesis; dimethylallyl diphosphate from (2E)-4-hydroxy-3-methylbutenyl diphosphate: step 1/1. It participates in isoprenoid biosynthesis; isopentenyl diphosphate biosynthesis via DXP pathway; isopentenyl diphosphate from 1-deoxy-D-xylulose 5-phosphate: step 6/6. Its function is as follows. Catalyzes the conversion of 1-hydroxy-2-methyl-2-(E)-butenyl 4-diphosphate (HMBPP) into a mixture of isopentenyl diphosphate (IPP) and dimethylallyl diphosphate (DMAPP). Acts in the terminal step of the DOXP/MEP pathway for isoprenoid precursor biosynthesis. The polypeptide is 4-hydroxy-3-methylbut-2-enyl diphosphate reductase (Roseobacter denitrificans (strain ATCC 33942 / OCh 114) (Erythrobacter sp. (strain OCh 114))).